We begin with the raw amino-acid sequence, 473 residues long: Adenosylhomocysteinase (473 aa).

3 residues coordinate substrate: Thr60, Asp135, and Glu197. 198 to 200 lines the NAD(+) pocket; sequence TTT. Residues Lys227 and Asp231 each coordinate substrate. Residues Asn232, 261–266, Glu284, Asn319, 340–342, and Asn385 each bind NAD(+); these read GFGDVG and IGH.

Belongs to the adenosylhomocysteinase family. It depends on NAD(+) as a cofactor.

Its subcellular location is the cytoplasm. It carries out the reaction S-adenosyl-L-homocysteine + H2O = L-homocysteine + adenosine. The protein operates within amino-acid biosynthesis; L-homocysteine biosynthesis; L-homocysteine from S-adenosyl-L-homocysteine: step 1/1. May play a key role in the regulation of the intracellular concentration of adenosylhomocysteine. This is Adenosylhomocysteinase from Bradyrhizobium diazoefficiens (strain JCM 10833 / BCRC 13528 / IAM 13628 / NBRC 14792 / USDA 110).